A 147-amino-acid polypeptide reads, in one-letter code: Cyanate hydratase (147 aa).

Active-site residues include arginine 88, glutamate 91, and serine 114.

The protein belongs to the cyanase family.

It catalyses the reaction cyanate + hydrogencarbonate + 3 H(+) = NH4(+) + 2 CO2. Catalyzes the reaction of cyanate with bicarbonate to produce ammonia and carbon dioxide. The protein is Cyanate hydratase of Parasynechococcus marenigrum (strain WH8102).